Here is an 867-residue protein sequence, read N- to C-terminus: DNA replication licensing factor mcm6 (867 aa).

The tract at residues 51 to 76 is disordered; the sequence is IDKNNNNNNNEDNEDNNENENEYDEN. Positions 61–75 are enriched in acidic residues; it reads EDNEDNNENENEYDE. In terms of domain architecture, MCM spans 420–626; that stretch reads IYQNLVNSIC…ESDHRIAEHI (207 aa). 5 residues coordinate ATP: serine 473, threonine 474, lysine 476, serine 477, and asparagine 578. The short motif at 602–605 is the Arginine finger element; it reads SRFD. Arginine 693 and glutamate 696 together coordinate ADP.

The protein belongs to the MCM family. In terms of assembly, component of the MCM2-7 complex. The complex forms a toroidal hexameric ring with the proposed subunit order MCM2-MCM6-MCM4-MCM7-MCM3-MCM5 (By simililarity).

The protein resides in the nucleus. It catalyses the reaction ATP + H2O = ADP + phosphate + H(+). Its function is as follows. Acts as a component of the MCM2-7 complex (MCM complex) which is the replicative helicase essential for 'once per cell cycle' DNA replication initiation and elongation in eukaryotic cells. Core component of CDC45-MCM-GINS (CMG) helicase, the molecular machine that unwinds template DNA during replication, and around which the replisome is built. The active ATPase sites in the MCM2-7 ring are formed through the interaction surfaces of two neighboring subunits such that a critical structure of a conserved arginine finger motif is provided in trans relative to the ATP-binding site of the Walker A box of the adjacent subunit. The six ATPase active sites, however, are likely to contribute differentially to the complex helicase activity. The polypeptide is DNA replication licensing factor mcm6 (mcm6) (Dictyostelium discoideum (Social amoeba)).